We begin with the raw amino-acid sequence, 506 residues long: Protein spinster homolog 1 (506 aa).

The segment at 1 to 42 (MSQADADITPFFADDNEGEGPVENGVGSPLPEDEEEESPSGV) is disordered. Low complexity predominate over residues 21-30 (PVENGVGSPL). Transmembrane regions (helical) follow at residues 52–71 (IVLC…VAGV), 87–107 (GLLQ…FGYL), 115–135 (LIMC…SFIG), 149–169 (VGVG…DLFV), 176–196 (MLSI…IVGS), 207–227 (WALR…MLVV), 266–286 (FGFT…PAFL), 310–330 (LIFG…GVQA), 344–364 (LVCA…IMFA), 373–393 (VFIF…ADIL), 408–428 (FQIV…IGVV), and 450–470 (LLCS…AVFI).

The protein belongs to the major facilitator superfamily. Spinster (TC 2.A.1.49) family. Expressed in yolk cells.

The protein localises to the lysosome membrane. It carries out the reaction a 1-acyl-sn-glycero-3-phosphocholine(out) + H(+)(out) = a 1-acyl-sn-glycero-3-phosphocholine(in) + H(+)(in). The catalysed reaction is a 1-acyl-sn-glycero-3-phosphoethanolamine(out) + H(+)(out) = a 1-acyl-sn-glycero-3-phosphoethanolamine(in) + H(+)(in). The enzyme catalyses a 1-O-(1Z-alkenyl)-sn-glycero-3-phosphocholine(out) + H(+)(out) = a 1-O-(1Z-alkenyl)-sn-glycero-3-phosphocholine(in) + H(+)(in). It catalyses the reaction a 1-O-(1Z-alkenyl)-sn-glycero-3-phosphoethanolamine(out) + H(+)(out) = a 1-O-(1Z-alkenyl)-sn-glycero-3-phosphoethanolamine(in) + H(+)(in). Functionally, mediates the rate-limiting, proton-dependent, lysosomal efflux of lysophospholipids. Selective for zwitterionic headgroups such as lysophosphatidylcholine (LPC) and lysophosphatidylethanolamine (LPE). Essential player in lysosomal homeostasis. Critical for embryogenesis. Involved in the regulation of developmental senescence. The protein is Protein spinster homolog 1 (spns1) of Danio rerio (Zebrafish).